A 1682-amino-acid polypeptide reads, in one-letter code: Sodium channel protein type 7 subunit alpha (1682 aa).

Residues 1–117 (MLASPEPKGL…RRTTIKVLVH (117 aa)) are Cytoplasmic-facing. One copy of the I repeat lies at 100–401 (TLSPFNCIRR…ILAMAYEEEK (302 aa)). A helical membrane pass occupies residues 118-137 (PFFQLFILISVLIDCVFMSL). Over 138 to 141 (TNLP) the chain is Extracellular. Residues 142 to 167 (KWRPVLENTLLGIYTFEILVKLFARG) form a helical membrane-spanning segment. Topologically, residues 168-178 (VWAGSFSFLGD) are cytoplasmic. Residues 179–196 (PWNWLDFSVTVFEVIIRY) form a helical membrane-spanning segment. The Extracellular portion of the chain corresponds to 197-200 (SPLD). A helical transmembrane segment spans residues 201 to 219 (FIPTLQTARTLRILKIIPL). Over 220-237 (NQGLKSLVGVLIHCLKQL) the chain is Cytoplasmic. Residues 238–259 (IGVIILTLFFLSIFSLIGMGLF) traverse the membrane as a helical segment. Residues 260-338 (MGNLKHKCFR…PDQGFTNFDS (79 aa)) lie on the Extracellular side of the membrane. Cysteine 267 and cysteine 307 are disulfide-bonded. N-linked (GlcNAc...) asparagine glycosylation is found at asparagine 276, asparagine 281, and asparagine 309. Residues 339 to 366 (FGWALFALFRLMAQDYPEVLYHQILYAS) constitute an intramembrane region (pore-forming). Glycine 367 is a topological domain (extracellular). Residues 368 to 407 (KVYMIFFVVVSFLFSFYMASLFLGILAMAYEEEKQRVGEI) traverse the membrane as a helical segment. Residues 408–505 (SKKIEPKFQQ…EFVHRIIMAP (98 aa)) lie on the Cytoplasmic side of the membrane. Serine 442 is subject to Phosphoserine; by PKA. The stretch at 487-758 (CSPCWLKLKE…QLAVARIKKG (272 aa)) is one II repeat. Residues 506 to 521 (FTDLFLIICIILNVCF) form a helical membrane-spanning segment. At 522 to 530 (LTLEHYPMS) the chain is on the extracellular side. Residues 531 to 559 (KQTNTLLNIGNLVFIGIFTAEMIFKIIAM) traverse the membrane as a helical segment. At 560-568 (HPYGYFQVG) the chain is on the cytoplasmic side. Residues 569–586 (WNIFDSMIVFHGLIELCL) traverse the membrane as a helical segment. At 587-592 (ANVAGM) the chain is on the extracellular side. The helical transmembrane segment at 593 to 609 (ALLRLFRMLRIFKLGKY) threads the bilayer. Residues 610 to 626 (WPTFQILMWSLSNSWVA) are Cytoplasmic-facing. A helical membrane pass occupies residues 627–655 (LKDLVLLLFTFIFFSAAFGMKLFGKNYEE). Topologically, residues 656-673 (FVCHIDKDCQLPRWHMHD) are extracellular. 2 disulfides stabilise this stretch: cysteine 658–cysteine 664 and cysteine 696–cysteine 705. The pore-forming intramembrane region spans 674 to 700 (FFHSFLNVFRILCGEWVETLWDCMEVA). Glycine 701 is a topological domain (extracellular). A helical membrane pass occupies residues 702–732 (QSWCIPFYLMVILIGNLLVLYLFLALVSSFS). At 733-934 (SCKDVTAEEN…KTCCKIVENN (202 aa)) the chain is on the cytoplasmic side. Threonine 777 carries the phosphothreonine; by PKA modification. The disordered stretch occupies residues 801–871 (TQDFLKDKEK…SKEKIKQSSS (71 aa)). Residues 804-819 (FLKDKEKSSGTEKNAT) show a composition bias toward basic and acidic residues. The segment covering 820–834 (ENESQSLIPSPSVSE) has biased composition (polar residues). The residue at position 843 (serine 843) is a Phosphoserine. Serine 869 and serine 905 each carry phosphoserine; by PKA. Residues 916–1224 (KGKIWQNIRK…RKQYRRLKKL (309 aa)) form an III repeat. The helical transmembrane segment at 935–953 (WFKCFIGLVTLLSTGTLAF) threads the bilayer. At 954–961 (EDIYMDQR) the chain is on the extracellular side. A helical transmembrane segment spans residues 962–990 (KTIKILLEYADMIFTYIFILEMLLKWMAY). Residues 991-998 (GFKAYFSN) lie on the Cytoplasmic side of the membrane. Residues 999 to 1020 (GWYRLDFVVVIVFCLSLIGKTR) traverse the membrane as a helical segment. Position 1021 (glutamate 1021) is a topological domain, extracellular. The helical transmembrane segment at 1022–1040 (ELKPLISMKFLRPLRVLSQ) threads the bilayer. Topologically, residues 1041–1055 (FERMKVVVRALIKTT) are cytoplasmic. The chain crosses the membrane as a helical span at residues 1056-1080 (LPTLNVFLVCLMIWLIFSIMGVDLF). Residues 1081 to 1127 (AGRFYECIDPTSGERFPSSEVMNKSRCESLLFNESMLWENAKMNFDN) are Extracellular-facing. A disulfide bridge links cysteine 1087 with cysteine 1107. N-linked (GlcNAc...) asparagine glycans are attached at residues asparagine 1103 and asparagine 1113. The pore-forming intramembrane region spans 1128-1154 (VGNGFLSLLQVATFNGWITIMNSAIDS). Residues 1155–1167 (VAVNIQPHFEVNI) lie on the Extracellular side of the membrane. The chain crosses the membrane as a helical span at residues 1168-1202 (YMYCYFINFIIFGVFLPLSMLITVIIDNFNKHKIK). Residues 1203–1250 (LGGSNIFITVKQRKQYRRLKKLMYEDSQRPVPRPLNKLQGFIFDVVTS) lie on the Cytoplasmic side of the membrane. An IV repeat occupies 1233 to 1531 (VPRPLNKLQG…WKRFDPDRTQ (299 aa)). The helical transmembrane segment at 1251–1272 (QAFNVIVMVLICFQAIAMMIDT) threads the bilayer. The Extracellular portion of the chain corresponds to 1273 to 1276 (DVQS). Residues 1277-1305 (LQMSIALYWINSIFVMLYTMECILKLIAF) form a helical membrane-spanning segment. Residues 1306 to 1312 (RCFYFTI) lie on the Cytoplasmic side of the membrane. Residues 1313 to 1338 (AWNIFDFMVVIFSITGLCLPMTVGSY) traverse the membrane as a helical segment. The Extracellular portion of the chain corresponds to 1339–1341 (LVP). A helical transmembrane segment spans residues 1342–1362 (PSLVQLILLSRIIHMLRLGKG). Residues 1363–1377 (PKVFHNLMLPLMLSL) are Cytoplasmic-facing. A helical transmembrane segment spans residues 1378–1402 (PALLNIILLIFLVMFIYAVFGMYNF). Topologically, residues 1403–1420 (AYVKKEAGINDVSNFETF) are extracellular. Positions 1421-1444 (GNSMLCLFQVAIFAGWDGMLDAIF) form an intramembrane region, pore-forming. The Extracellular segment spans residues 1445 to 1468 (NSKWSDCDPDKINPGTQVRGDCGN). Cysteine 1451 and cysteine 1466 form a disulfide bridge. The chain crosses the membrane as a helical span at residues 1469 to 1504 (PSVGIFYFVSYILISWLIIVNMYIVVVMEFLNIASK). Residues 1505–1682 (KKNKTLSEDD…KEKSPIQSQI (178 aa)) lie on the Cytoplasmic side of the membrane.

It belongs to the sodium channel (TC 1.A.1.10) family. SCN7A subfamily. As to quaternary structure, the sodium channel formed by SCN7A is probably a heterooligomeric complex consisting of the ion conducting pore forming alpha subunit SCN7A and regulatory beta subunits such as SCN3B. Interacts with ATP1A1; activates ATP1A1 and thereby indirectly signals to nearby neurons to regulate sodium homeostasis. In terms of tissue distribution, heart and uterus.

It localises to the cell membrane. It carries out the reaction Na(+)(in) = Na(+)(out). Its function is as follows. Sodium leak channel functioning as an osmosensor regulating sodium ion levels in various tissues and organs. While most sodium channels are voltage-gated, SCN7A is not and lets sodium flow through membrane along its concentration gradient. In glial cells of the central nervous system, senses body-fluid sodium levels and controls salt intake behavior as well as voluntary water intake through activation of nearby neurons to maintain appropriate sodium levels in the body. By mediating sodium influx into keratinocytes, also plays a role in skin barrier homeostasis. The polypeptide is Sodium channel protein type 7 subunit alpha (Homo sapiens (Human)).